The sequence spans 153 residues: Large ribosomal subunit protein uL23m (153 aa).

The disordered stretch occupies residues 110–153; it reads IFPEKDKKSKEGSVEEMHEKFMEDERQRQKPDPRRGGVTEWFGL. A compositionally biased stretch (basic and acidic residues) spans 111–146; the sequence is FPEKDKKSKEGSVEEMHEKFMEDERQRQKPDPRRGG.

It belongs to the universal ribosomal protein uL23 family. In terms of assembly, component of the mitochondrial ribosome large subunit (39S) which comprises a 16S rRNA and about 50 distinct proteins.

It localises to the mitochondrion. The polypeptide is Large ribosomal subunit protein uL23m (mrpl23) (Danio rerio (Zebrafish)).